The primary structure comprises 128 residues: Large ribosomal subunit protein mL51 (128 aa).

The N-terminal 31 residues, methionine 1 to leucine 31, are a transit peptide targeting the mitochondrion.

It belongs to the mitochondrion-specific ribosomal protein mL51 family. In terms of assembly, component of the mitochondrial ribosome large subunit (39S) which comprises a 16S rRNA and about 50 distinct proteins. Interacts with OXA1L.

The protein localises to the mitochondrion. The protein is Large ribosomal subunit protein mL51 (Mrpl51) of Mus musculus (Mouse).